The following is a 591-amino-acid chain: Glutathione S-transferase T2 (591 aa).

Residues 1–82 (MKLKVYADRM…YLSSAYASVV (82 aa)) form the GST N-terminal domain. Glutathione-binding positions include 11–12 (SQ), 40–41 (QL), 53–54 (KV), and 66–67 (ES). Residues 89–226 (DLSKRAKIHS…EVLFRAKDRF (138 aa)) enclose the GST C-terminal domain. The segment at 229–272 (QREMATASKPGPQSKIIQFSSIGGTSDGPNLVQDTTDRKARRRK) is disordered. The segment covering 243–262 (KIIQFSSIGGTSDGPNLVQD) has biased composition (polar residues). One can recognise a Myb-like domain in the interval 265–338 (DRKARRRKWS…HCRQRWRKIN (74 aa)).

Belongs to the GST superfamily. Theta family.

Its subcellular location is the peroxisome. It carries out the reaction RX + glutathione = an S-substituted glutathione + a halide anion + H(+). In terms of biological role, may be involved in the conjugation of reduced glutathione to a wide number of exogenous and endogenous hydrophobic electrophiles and have a detoxification role against certain herbicides. This chain is Glutathione S-transferase T2 (GSTT2), found in Arabidopsis thaliana (Mouse-ear cress).